Reading from the N-terminus, the 584-residue chain is Putative adenine deaminase BA_3032/GBAA_3032/BAS2818 (584 aa).

It belongs to the metallo-dependent hydrolases superfamily. Adenine deaminase family.

It carries out the reaction adenine + H2O + H(+) = hypoxanthine + NH4(+). This Bacillus anthracis protein is Putative adenine deaminase BA_3032/GBAA_3032/BAS2818.